The chain runs to 689 residues: Protein asunder (689 aa).

The stretch at 521-550 forms a coiled coil; sequence NGARLKLSKAKDQYRLLYRELEQLIQLNAT. Disordered stretches follow at residues 592–619 and 665–689; these read PERL…SKRR and GTKD…SVRS. A compositionally biased stretch (low complexity) spans 599-614; it reads SSVGASGSSSSNSLLK. A Nuclear localization signal (NLS) motif is present at residues 613-619; that stretch reads LKASKRR.

Belongs to the Integrator subunit 13 family. Belongs to the multiprotein complex Integrator, at least composed of IntS1, IntS2, IntS3, IntS4, omd/IntS5, IntS6, defl/IntS7, IntS8, IntS9, IntS10, IntS11, IntS12, asun/IntS13, IntS14 and IntS15. The core complex associates with protein phosphatase 2A subunits mts/PP2A and Pp2A-29B, to form the Integrator-PP2A (INTAC) complex. Phosphorylated. In terms of tissue distribution, expressed in nurse cells at stages 9-10 of oogenesis and exported to the oocyte. Also expressed in the follicle cells surrounding the oocyte.

Its subcellular location is the nucleus. The protein localises to the cytoplasm. It localises to the perinuclear region. Its function is as follows. Component of the integrator complex, a multiprotein complex that terminates RNA polymerase II (Pol II) transcription in the promoter-proximal region of genes. The integrator complex provides a quality checkpoint during transcription elongation by driving premature transcription termination of transcripts that are unfavorably configured for transcriptional elongation: the complex terminates transcription by (1) catalyzing dephosphorylation of the C-terminal domain (CTD) of Pol II subunit Polr2A/Rbp1 and Spt5, and (2) degrading the exiting nascent RNA transcript via endonuclease activity. The integrator complex is also involved in the 3'-end processing of the U7 snRNA, and also the spliceosomal snRNAs U1, U2, U4 and U5. Plays a role as a regulator of spermatogenesis. Crucial regulator of the mitotic cell cycle and development. Required for the correct dynein-dynactin perinuclear localization important for nucleus-centrosome coupling that occur upon meiotic progression of primary spermatocytes. Plays a role in sperm motility and fertility. May have a role in the PNG/PLU/GNU pathway. The sequence is that of Protein asunder from Drosophila melanogaster (Fruit fly).